We begin with the raw amino-acid sequence, 156 residues long: Low-salt glycan biosynthesis protein Agl8 (156 aa).

Substrate-binding positions include 14–15 and Arg47; that span reads RI. Residues 25–156 form the Nudix hydrolase domain; it reads ANVPLVSVDL…YVERYLDALD (132 aa). Gly60, Glu80, and Gln130 together coordinate Mg(2+). Residues 61-82 carry the Nudix box motif; sequence GTVFKNETLTDALYRVADEELG.

The protein belongs to the Nudix hydrolase family. Mg(2+) serves as cofactor.

It participates in protein modification; protein glycosylation. The protein operates within cell surface structure biogenesis; S-layer biogenesis. Its function is as follows. Nudix hydrolase involved in N-glycan biosynthetic pathway that takes place under low-salt conditions (1.75 M instead of 3.4 M). Participates in the formation of the tetrasaccharide present at 'Asn-532' of S-layer glycoprotein Csg, consisting of a sulfated hexose, 2 hexoses and rhamnose. Mediates attachment of sugar 3 in the tetrasaccharide. This chain is Low-salt glycan biosynthesis protein Agl8 (agl8), found in Haloferax volcanii (strain ATCC 29605 / DSM 3757 / JCM 8879 / NBRC 14742 / NCIMB 2012 / VKM B-1768 / DS2) (Halobacterium volcanii).